We begin with the raw amino-acid sequence, 198 residues long: ATP synthase protein MI25 (198 aa).

A helical membrane pass occupies residues 29 to 49 (ISIYNEEMIVALCFIGFIIFS).

Belongs to the ATPase protein MI25 family. As to quaternary structure, F-type ATPases have 2 components, CF(1) - the catalytic core - and CF(0) - the membrane proton channel. CF(1) has five subunits: alpha(3), beta(3), gamma(1), delta(1), epsilon(1). CF(0) has three main subunits: a, b and c.

It localises to the mitochondrion membrane. In terms of biological role, this is one of the chains of the nonenzymatic component (CF(0) subunit) of the mitochondrial ATPase complex. This chain is ATP synthase protein MI25, found in Nicotiana tabacum (Common tobacco).